Here is a 209-residue protein sequence, read N- to C-terminus: Large ribosomal subunit protein uL3 (209 aa).

Residue Gln-150 is modified to N5-methylglutamine.

The protein belongs to the universal ribosomal protein uL3 family. In terms of assembly, part of the 50S ribosomal subunit. Forms a cluster with proteins L14 and L19. Post-translationally, methylated by PrmB.

Its function is as follows. One of the primary rRNA binding proteins, it binds directly near the 3'-end of the 23S rRNA, where it nucleates assembly of the 50S subunit. This is Large ribosomal subunit protein uL3 from Buchnera aphidicola subsp. Acyrthosiphon pisum (strain 5A).